Here is a 199-residue protein sequence, read N- to C-terminus: Glycerol-3-phosphate acyltransferase (199 aa).

The next 5 membrane-spanning stretches (helical) occupy residues Phe-4–Ile-24, Leu-56–Leu-76, Gln-80–Phe-100, Ile-115–Leu-135, and Tyr-154–Arg-176.

It belongs to the PlsY family. As to quaternary structure, probably interacts with PlsX.

It is found in the cell inner membrane. It carries out the reaction an acyl phosphate + sn-glycerol 3-phosphate = a 1-acyl-sn-glycero-3-phosphate + phosphate. Its pathway is lipid metabolism; phospholipid metabolism. Its function is as follows. Catalyzes the transfer of an acyl group from acyl-phosphate (acyl-PO(4)) to glycerol-3-phosphate (G3P) to form lysophosphatidic acid (LPA). This enzyme utilizes acyl-phosphate as fatty acyl donor, but not acyl-CoA or acyl-ACP. This is Glycerol-3-phosphate acyltransferase from Haemophilus influenzae (strain PittEE).